Consider the following 265-residue polypeptide: DNA repair protein RecO (265 aa).

It belongs to the RecO family.

Functionally, involved in DNA repair and RecF pathway recombination. The sequence is that of DNA repair protein RecO from Mycobacterium marinum (strain ATCC BAA-535 / M).